The chain runs to 2255 residues: Defense against restriction protein B (2255 aa).

Residues 841-1126 form the Helicase ATP-binding domain; sequence VRRLSEDGRG…YNMLSHVLPK (286 aa). 854–861 contributes to the ATP binding site; that stretch reads FGTGLGKT. A DEAH box motif is present at residues 1052-1055; the sequence is DEGH. Residues 1198 to 1234 are a coiled coil; sequence ELDEHQQDAPLTEEQLAAYEELRQQAEAAAKANNGVT. A Helicase C-terminal domain is found at 1383–1568; that stretch reads KLKRIICNAL…EMENADANDM (186 aa). Positions 1617–1654 form a coiled coil; it reads HAAGEDVEVLTAELERSKAELEKTTAEVAKFKQAVMAK.

Belongs to the helicase family.

The protein localises to the virion. In terms of biological role, capsid internal protein that is probably ejected along with the viral DNA and prevents degradation of viral DNA by the host EcoB and EcoK restriction-modification antiviral defense systems. The polypeptide is Defense against restriction protein B (Escherichia phage P1 (Bacteriophage P1)).